The following is a 387-amino-acid chain: ATP phosphoribosyltransferase regulatory subunit (387 aa).

It belongs to the class-II aminoacyl-tRNA synthetase family. HisZ subfamily. As to quaternary structure, heteromultimer composed of HisG and HisZ subunits.

The protein resides in the cytoplasm. It participates in amino-acid biosynthesis; L-histidine biosynthesis; L-histidine from 5-phospho-alpha-D-ribose 1-diphosphate: step 1/9. Its function is as follows. Required for the first step of histidine biosynthesis. May allow the feedback regulation of ATP phosphoribosyltransferase activity by histidine. The polypeptide is ATP phosphoribosyltransferase regulatory subunit (Polynucleobacter necessarius subsp. necessarius (strain STIR1)).